Here is a 299-residue protein sequence, read N- to C-terminus: tRNA pseudouridine synthase B (299 aa).

Asp38 functions as the Nucleophile in the catalytic mechanism.

This sequence belongs to the pseudouridine synthase TruB family. Type 1 subfamily.

The catalysed reaction is uridine(55) in tRNA = pseudouridine(55) in tRNA. Responsible for synthesis of pseudouridine from uracil-55 in the psi GC loop of transfer RNAs. In Pediococcus pentosaceus (strain ATCC 25745 / CCUG 21536 / LMG 10740 / 183-1w), this protein is tRNA pseudouridine synthase B.